The primary structure comprises 281 residues: Nucleotide-binding protein PSHAa2554 (281 aa).

8-15 (GRSGSGKS) contacts ATP. 56 to 59 (DVRN) lines the GTP pocket.

Belongs to the RapZ-like family.

Its function is as follows. Displays ATPase and GTPase activities. This is Nucleotide-binding protein PSHAa2554 from Pseudoalteromonas translucida (strain TAC 125).